We begin with the raw amino-acid sequence, 224 residues long: Uridylate kinase (224 aa).

Residue 9 to 10 coordinates ATP; sequence GS. Position 43 (glycine 43) interacts with UMP. The ATP site is built by glycine 44 and arginine 48. UMP is bound by residues aspartate 65 and 113–119; that span reads VVPGQTT. 3 residues coordinate ATP: threonine 139, phenylalanine 145, and aspartate 148.

It belongs to the UMP kinase family. In terms of assembly, homohexamer.

The protein localises to the cytoplasm. The catalysed reaction is UMP + ATP = UDP + ADP. It participates in pyrimidine metabolism; CTP biosynthesis via de novo pathway; UDP from UMP (UMPK route): step 1/1. Inhibited by UTP. Functionally, catalyzes the reversible phosphorylation of UMP to UDP. The polypeptide is Uridylate kinase (Methanocella arvoryzae (strain DSM 22066 / NBRC 105507 / MRE50)).